A 266-amino-acid polypeptide reads, in one-letter code: Prolactin-7A1 (266 aa).

Positions Met-1–Cys-30 are cleaved as a signal peptide. N-linked (GlcNAc...) asparagine glycans are attached at residues Asn-36, Asn-58, Asn-110, Asn-149, and Asn-157. Intrachain disulfides connect Cys-114-Cys-231 and Cys-248-Cys-257.

The protein belongs to the somatotropin/prolactin family. Expressed specifically in the placenta. Detected only in the trophoblast giant cells.

The protein resides in the secreted. This is Prolactin-7A1 (Prl7a1) from Mus musculus (Mouse).